Consider the following 2258-residue polypeptide: Probable serine/threonine-protein kinase ifkA (2258 aa).

Disordered stretches follow at residues 43 to 108 (RVNS…HQMG) and 189 to 308 (EMNN…KEND). A compositionally biased stretch (low complexity) spans 45–57 (NSSDDINNNNNNN). Residues 58 to 100 (NDDDDDNDDYDDSDDENSDSDYDDYDDSDDENSDDEFYSDDED) show a composition bias toward acidic residues. Over residues 191-301 (NNLTNSNNSN…NKELIDNNNN (111 aa)) the composition is skewed to low complexity. Residues 273 to 309 (NNNNNISNNKINKINNNNNNKELIDNNNNNKDKENDL) adopt a coiled-coil conformation. The 373-residue stretch at 319–691 (WKKGSCIERK…AGILLKHPFL (373 aa)) folds into the Protein kinase 1 domain. ATP is bound by residues 325–333 (IERKSNYSV) and Lys-348. The interval 358 to 398 (SSSSLTSLSNSNNNNSNNNNNNNNNNNNNNNNNNNNNNNNN) is disordered. The segment covering 359-398 (SSSLTSLSNSNNNNSNNNNNNNNNNNNNNNNNNNNNNNNN) has biased composition (low complexity). Asp-498 acts as the Proton acceptor in catalysis. Disordered stretches follow at residues 741 to 768 (KSQT…NGSN) and 782 to 870 (PLAT…MTPL). Positions 746-768 (NNNNDNNNLASSNELLSSSNGSN) are enriched in low complexity. Residues 782-791 (PLATSSSLDN) show a composition bias toward polar residues. A compositionally biased stretch (pro residues) spans 793-805 (TPPPSRPISPKPS). Low complexity predominate over residues 841–870 (PQQNFNTPPTTTTTTTTPTATPTTPTMTPL). Residues 894 to 1482 (FEEIEMIGKG…TKQLLESGLL (589 aa)) enclose the Protein kinase 2 domain. ATP-binding positions include 900-908 (IGKGGFGVV) and Lys-923. A compositionally biased stretch (low complexity) spans 1053–1094 (TLSSSNTSSSSSLLSNNKSKILNTSKSTSTNTSTSTSTSNTN). The segment at 1053–1259 (TLSSSNTSSS…SSSRKKPPKE (207 aa)) is disordered. The segment covering 1095–1106 (KNKKISKKKKSK) has biased composition (basic residues). A compositionally biased stretch (low complexity) spans 1156 to 1185 (NNNNNNDNNNNYHSDNESDSFSGSISMSDG). Residues 1206 to 1233 (DENENDDDDEEDDDDEYDEEDDDYETFD) are compositionally biased toward acidic residues. The segment covering 1242-1251 (SNNSKLSTSS) has biased composition (low complexity). The active-site Proton acceptor is the Asp-1313. Disordered regions lie at residues 1343–1370 (KSDD…TAQQ) and 2048–2104 (GSGG…QQTS). Residues 1347–1368 (LNSSTSNTANNINLSSSTNSTA) are compositionally biased toward low complexity. The segment covering 2048-2072 (GSGGSGGSGGGSSMSSGGGGGGNSN) has biased composition (gly residues). Positions 2085–2099 (SNQSTSSSGNSNNSN) are enriched in low complexity.

It belongs to the protein kinase superfamily. Ser/Thr protein kinase family.

It catalyses the reaction L-seryl-[protein] + ATP = O-phospho-L-seryl-[protein] + ADP + H(+). The catalysed reaction is L-threonyl-[protein] + ATP = O-phospho-L-threonyl-[protein] + ADP + H(+). Functionally, phosphorylates eIF2-alpha, from 1 to 7 hours after the onset of development or during the preaggregation state, resulting in a shift from polysomes to free ribosomes for bulk mRNA. This Dictyostelium discoideum (Social amoeba) protein is Probable serine/threonine-protein kinase ifkA (ifkA).